The following is a 94-amino-acid chain: Pyrimidine/purine nucleoside phosphorylase (94 aa).

The protein belongs to the nucleoside phosphorylase PpnP family.

It catalyses the reaction a purine D-ribonucleoside + phosphate = a purine nucleobase + alpha-D-ribose 1-phosphate. It carries out the reaction adenosine + phosphate = alpha-D-ribose 1-phosphate + adenine. The catalysed reaction is cytidine + phosphate = cytosine + alpha-D-ribose 1-phosphate. The enzyme catalyses guanosine + phosphate = alpha-D-ribose 1-phosphate + guanine. It catalyses the reaction inosine + phosphate = alpha-D-ribose 1-phosphate + hypoxanthine. It carries out the reaction thymidine + phosphate = 2-deoxy-alpha-D-ribose 1-phosphate + thymine. The catalysed reaction is uridine + phosphate = alpha-D-ribose 1-phosphate + uracil. The enzyme catalyses xanthosine + phosphate = alpha-D-ribose 1-phosphate + xanthine. In terms of biological role, catalyzes the phosphorolysis of diverse nucleosides, yielding D-ribose 1-phosphate and the respective free bases. Can use uridine, adenosine, guanosine, cytidine, thymidine, inosine and xanthosine as substrates. Also catalyzes the reverse reactions. The polypeptide is Pyrimidine/purine nucleoside phosphorylase (Pseudomonas putida (strain GB-1)).